A 452-amino-acid chain; its full sequence is MASVPTGENWTDGTAGVGSHTGNLSAALGITEWLALQAGNFSSALGLPVTSQAPSQVRANLTNQFVQPSWRIALWSLAYGLVVAVAVFGNLIVIWIILAHKRMRTVTNYFLVNLAFSDASVAAFNTLVNFIYGVHSEWYFGANYCRFQNFFPITAVFASIYSMTAIAVDRYMAIIDPLKPRLSATATKIVIGSIWILAFLLAFPQCLYSKIKVMPGRTLCYVQWPEGPKQHFTYHIIVIILVYCFPLLIMGVTYTIVGITLWGGEIPGDTCDKYHEQLKAKRKVVKMMIIVVVTFAICWLPYHVYFILTAIYQQLNRWKYIQQVYLASFWLAMSSTMYNPIIYCCLNKRFRAGFKRAFRWCPFIQVSSYDELELKTTRFHPTRQSSLYTVSRMESVTVLYDPSEGDPAKSSRKKRAVPRDPSANGCSHREFKSASTTSSFISSPYTSVDEYS.

Over 1–71 (MASVPTGENW…TNQFVQPSWR (71 aa)) the chain is Extracellular. 4 N-linked (GlcNAc...) asparagine glycosylation sites follow: Asn9, Asn23, Asn40, and Asn60. The chain crosses the membrane as a helical span at residues 72-94 (IALWSLAYGLVVAVAVFGNLIVI). Over 95–104 (WIILAHKRMR) the chain is Cytoplasmic. The chain crosses the membrane as a helical span at residues 105 to 126 (TVTNYFLVNLAFSDASVAAFNT). Residues 127–146 (LVNFIYGVHSEWYFGANYCR) are Extracellular-facing. A disulfide bond links Cys145 and Cys220. A helical transmembrane segment spans residues 147–168 (FQNFFPITAVFASIYSMTAIAV). The Cytoplasmic portion of the chain corresponds to 169–188 (DRYMAIIDPLKPRLSATATK). A helical transmembrane segment spans residues 189–209 (IVIGSIWILAFLLAFPQCLYS). The Extracellular portion of the chain corresponds to 210-232 (KIKVMPGRTLCYVQWPEGPKQHF). Residues 233-257 (TYHIIVIILVYCFPLLIMGVTYTIV) form a helical membrane-spanning segment. The Cytoplasmic segment spans residues 258 to 286 (GITLWGGEIPGDTCDKYHEQLKAKRKVVK). A helical membrane pass occupies residues 287 to 308 (MMIIVVVTFAICWLPYHVYFIL). At 309-321 (TAIYQQLNRWKYI) the chain is on the extracellular side. Residues 322–346 (QQVYLASFWLAMSSTMYNPIIYCCL) traverse the membrane as a helical segment. Residues 347–452 (NKRFRAGFKR…SPYTSVDEYS (106 aa)) are Cytoplasmic-facing. Cys361 carries the S-palmitoyl cysteine lipid modification. The interval 401–452 (DPSEGDPAKSSRKKRAVPRDPSANGCSHREFKSASTTSSFISSPYTSVDEYS) is disordered. Residues 433-452 (SASTTSSFISSPYTSVDEYS) show a composition bias toward low complexity.

It belongs to the G-protein coupled receptor 1 family. In terms of processing, the anchoring of this receptor to the plasma membrane is probably mediated by the palmitoylation of a cysteine residue.

It is found in the cell membrane. Functionally, this is a receptor for the tachykinin neuropeptide neuromedin-K (neurokinin B). It is associated with G proteins that activate a phosphatidylinositol-calcium second messenger system. This chain is Neuromedin-K receptor (Tacr3), found in Mus musculus (Mouse).